Consider the following 173-residue polypeptide: Crossover junction endodeoxyribonuclease RuvC (173 aa).

Active-site residues include Asp-8, Glu-67, and Asp-139. Mg(2+) is bound by residues Asp-8, Glu-67, and Asp-139.

This sequence belongs to the RuvC family. Homodimer which binds Holliday junction (HJ) DNA. The HJ becomes 2-fold symmetrical on binding to RuvC with unstacked arms; it has a different conformation from HJ DNA in complex with RuvA. In the full resolvosome a probable DNA-RuvA(4)-RuvB(12)-RuvC(2) complex forms which resolves the HJ. Mg(2+) serves as cofactor.

The protein resides in the cytoplasm. It catalyses the reaction Endonucleolytic cleavage at a junction such as a reciprocal single-stranded crossover between two homologous DNA duplexes (Holliday junction).. The RuvA-RuvB-RuvC complex processes Holliday junction (HJ) DNA during genetic recombination and DNA repair. Endonuclease that resolves HJ intermediates. Cleaves cruciform DNA by making single-stranded nicks across the HJ at symmetrical positions within the homologous arms, yielding a 5'-phosphate and a 3'-hydroxyl group; requires a central core of homology in the junction. The consensus cleavage sequence is 5'-(A/T)TT(C/G)-3'. Cleavage occurs on the 3'-side of the TT dinucleotide at the point of strand exchange. HJ branch migration catalyzed by RuvA-RuvB allows RuvC to scan DNA until it finds its consensus sequence, where it cleaves and resolves the cruciform DNA. The chain is Crossover junction endodeoxyribonuclease RuvC from Salmonella paratyphi C (strain RKS4594).